The following is a 248-amino-acid chain: Flagellar L-ring protein (248 aa).

The N-terminal stretch at 1-23 is a signal peptide; the sequence is MRHAFRHSVRTLGLLGLLPVLSA. Cys24 carries the N-palmitoyl cysteine lipid modification. Cys24 is lipidated: S-diacylglycerol cysteine.

The protein belongs to the FlgH family. The basal body constitutes a major portion of the flagellar organelle and consists of four rings (L,P,S, and M) mounted on a central rod.

Its subcellular location is the cell outer membrane. It localises to the bacterial flagellum basal body. In terms of biological role, assembles around the rod to form the L-ring and probably protects the motor/basal body from shearing forces during rotation. In Gluconobacter oxydans (strain 621H) (Gluconobacter suboxydans), this protein is Flagellar L-ring protein.